Consider the following 185-residue polypeptide: dCTP deaminase, dUMP-forming (185 aa).

Residues 99–104 (KSSIAR), Asp117, 125–127 (TLE), Gln146, Tyr159, Lys166, and Gln170 each bind dCTP. Residue Glu127 is the Proton donor/acceptor of the active site.

Belongs to the dCTP deaminase family. Homotrimer.

It catalyses the reaction dCTP + 2 H2O = dUMP + NH4(+) + diphosphate. Its pathway is pyrimidine metabolism; dUMP biosynthesis; dUMP from dCTP: step 1/1. Its function is as follows. Bifunctional enzyme that catalyzes both the deamination of dCTP to dUTP and the hydrolysis of dUTP to dUMP without releasing the toxic dUTP intermediate. This is dCTP deaminase, dUMP-forming from Methanospirillum hungatei JF-1 (strain ATCC 27890 / DSM 864 / NBRC 100397 / JF-1).